Consider the following 202-residue polypeptide: Glycerol-3-phosphate acyltransferase (202 aa).

4 consecutive transmembrane segments (helical) span residues 2–22 (ANLL…AVVV), 82–102 (DTGL…PVFH), 119–139 (AIDP…AFFF), and 158–178 (VLMN…VLLI).

The protein belongs to the PlsY family. In terms of assembly, probably interacts with PlsX.

The protein resides in the cell inner membrane. The catalysed reaction is an acyl phosphate + sn-glycerol 3-phosphate = a 1-acyl-sn-glycero-3-phosphate + phosphate. It functions in the pathway lipid metabolism; phospholipid metabolism. Functionally, catalyzes the transfer of an acyl group from acyl-phosphate (acyl-PO(4)) to glycerol-3-phosphate (G3P) to form lysophosphatidic acid (LPA). This enzyme utilizes acyl-phosphate as fatty acyl donor, but not acyl-CoA or acyl-ACP. The chain is Glycerol-3-phosphate acyltransferase from Cupriavidus taiwanensis (strain DSM 17343 / BCRC 17206 / CCUG 44338 / CIP 107171 / LMG 19424 / R1) (Ralstonia taiwanensis (strain LMG 19424)).